Consider the following 61-residue polypeptide: Small ribosomal subunit protein uS14 (61 aa).

Zn(2+) is bound by residues C24, C27, C40, and C43.

This sequence belongs to the universal ribosomal protein uS14 family. Zinc-binding uS14 subfamily. As to quaternary structure, part of the 30S ribosomal subunit. Contacts proteins S3 and S10. The cofactor is Zn(2+).

Functionally, binds 16S rRNA, required for the assembly of 30S particles and may also be responsible for determining the conformation of the 16S rRNA at the A site. The protein is Small ribosomal subunit protein uS14 of Syntrophus aciditrophicus (strain SB).